Here is a 354-residue protein sequence, read N- to C-terminus: Guanine nucleotide-binding protein G(i) subunit alpha-3 (354 aa).

Residue glycine 2 is the site of N-myristoyl glycine attachment. The S-palmitoyl cysteine moiety is linked to residue cysteine 3. The G-alpha domain maps to 32 to 354 (KEVKLLLLGA…KNNLKECGLY (323 aa)). Positions 35 to 48 (KLLLLGAGESGKST) are G1 motif. Residues glycine 42, glutamate 43, serine 44, glycine 45, lysine 46, serine 47, threonine 48, aspartate 150, serine 151, leucine 175, arginine 176, threonine 177, arginine 178, valine 179, lysine 180, threonine 181, valine 201, and glycine 203 each coordinate GTP. GDP contacts are provided by glutamate 43, serine 44, glycine 45, lysine 46, serine 47, and threonine 48. Serine 47 serves as a coordination point for Mg(2+). The GDP site is built by serine 151, leucine 175, arginine 176, threonine 177, and arginine 178. Residues 173-181 (DVLRTRVKT) form a G2 motif region. At arginine 178 the chain carries ADP-ribosylarginine; by cholera toxin. Threonine 181 is a binding site for Mg(2+). The interval 196-205 (FKMFDVGGQR) is G3 motif. A Deamidated glutamine; by Photorhabdus PAU_02230 modification is found at glutamine 204. Residues 265–272 (ILFLNKKD) form a G4 motif region. The GTP site is built by asparagine 269, lysine 270, aspartate 272, leucine 273, cysteine 325, alanine 326, and threonine 327. The GDP site is built by asparagine 269, lysine 270, and aspartate 272. A G5 motif region spans residues 324–329 (TCATDT). Cysteine 325 and alanine 326 together coordinate GDP. An ADP-ribosylcysteine; by pertussis toxin modification is found at cysteine 351.

Belongs to the G-alpha family. G(i/o/t/z) subfamily. Heterotrimeric G proteins are composed of 3 units; alpha, beta and gamma. The alpha subunit contains the guanine nucleotide binding site. GTP binding causes dissociation of the heterotrimer, liberating the individual subunits so that they can interact with downstream effector proteins. Forms a complex with CCDC88A/GIV and EGFR which leads to enhanced EGFR signaling and triggering of cell migration; ligand stimulation is required for recruitment of GNAI3 to the complex. Interacts (inactive GDP-bound form) with CCDC88A/GIV (via GBA motif); the interaction leads to activation of GNAI3. Interacts (inactive GDP-bound form) with CCDC88C/DAPLE (via GBA motif); the interaction leads to activation of GNAI3. Interacts (inactive GDP-bound form) with NUCB1 (via GBA motif) and NUCB2 (via GBA motif); the interaction leads to activation of GNAI3. Interacts (inactive GDP-bound form) with PLCD4 (via GBA motif); the interaction leads to activation of GNAI3. Interacts with INSR; the interaction is probably mediated by CCDC88A/GIV. Interacts with GPSM1. Interacts (GDP-bound form) with GPSM2 (via GoLoco domains). Does not interact with RGS2. Interacts with RGS8 and RGS10; this strongly enhances the intrinsic GTPase activity. Interacts with RGS16; this strongly enhances the intrinsic GTPase activity. Interacts with RGS12. Interacts (via active GTP- or inactive GDP-bound form) with RGS14. Interacts (via active GTP-bound form) with TRPC5 (via ANK repeats) in a homotetrameric ion channel; the interaction is direct and activates the channel activity. In terms of processing, (Microbial infection) Deamidated at Gln-204 by Photorhabdus asymbiotica toxin PAU_02230, blocking GTP hydrolysis of heterotrimeric GNAQ or GNA11 and G-alphai (GNAI1, GNAI2 or GNAI3) proteins, thereby activating RhoA.

It is found in the cytoplasm. It localises to the cell membrane. Its subcellular location is the cytoskeleton. The protein resides in the microtubule organizing center. The protein localises to the centrosome. Its function is as follows. Heterotrimeric guanine nucleotide-binding proteins (G proteins) function as transducers downstream of G protein-coupled receptors (GPCRs) in numerous signaling cascades. The alpha chain contains the guanine nucleotide binding site and alternates between an active, GTP-bound state and an inactive, GDP-bound state. Signaling by an activated GPCR promotes GDP release and GTP binding. The alpha subunit has a low GTPase activity that converts bound GTP to GDP, thereby terminating the signal. Both GDP release and GTP hydrolysis are modulated by numerous regulatory proteins. Signaling is mediated via effector proteins, such as adenylate cyclase. Inhibits adenylate cyclase activity, leading to decreased intracellular cAMP levels. Stimulates the activity of receptor-regulated K(+) channels. The active GTP-bound form prevents the association of RGS14 with centrosomes and is required for the translocation of RGS14 from the cytoplasm to the plasma membrane. May play a role in cell division. The active GTP-bound form activates the calcium permeant TRPC5 ion channels. This chain is Guanine nucleotide-binding protein G(i) subunit alpha-3 (GNAI3), found in Homo sapiens (Human).